Consider the following 100-residue polypeptide: Guanine nucleotide exchange factor MSS4 homolog (100 aa).

The region spanning 1–100 (MSNLRIVCQH…YLLLCSLEKN (100 aa)) is the MSS4 domain. Residues C8, C11, C73, and C76 each coordinate Zn(2+).

It belongs to the DSS4/MSS4 family.

Guanine-nucleotide-releasing protein that acts on members of the sec4/ypt1/rab subfamily. The sequence is that of Guanine nucleotide exchange factor MSS4 homolog from Schizosaccharomyces pombe (strain 972 / ATCC 24843) (Fission yeast).